A 145-amino-acid chain; its full sequence is Ribonuclease HI (145 aa).

Residues 1–142 (MNQTVYLYTD…ADDLANRGAA (142 aa)) enclose the RNase H type-1 domain. Residues D10, E48, D70, and D134 each coordinate Mg(2+).

The protein belongs to the RNase H family. Monomer. Mg(2+) serves as cofactor.

The protein resides in the cytoplasm. It carries out the reaction Endonucleolytic cleavage to 5'-phosphomonoester.. In terms of biological role, endonuclease that specifically degrades the RNA of RNA-DNA hybrids. The polypeptide is Ribonuclease HI (Neisseria meningitidis serogroup A / serotype 4A (strain DSM 15465 / Z2491)).